A 284-amino-acid chain; its full sequence is MTKEVWNTERLHDHFAQSLRVSEMYYDSKTEHQRLKVFQNGTFGRVLTLDDVVQTTEGDNFIYHEMLTHVPILAHGAAKRVLIIGGGDGGIAREVLKHASVEHVTMVEIDAGVVDFSKEYLPMLSQGAFDDARLNLVINDGAVFMKETEDKFDVIIVDSTDPIGPGEVLFTDTFYGHAARALTEDGIIVTQNGVPFMQGDELTNTMRAFQALFQDATCYLATIPTYVGGPMALGWGSHSTKARSVDLTTLEARFAAAGLSPDYYTPEVHKAAFALPGYVKKLFP.

The 235-residue stretch at 4–238 (EVWNTERLHD…GPMALGWGSH (235 aa)) folds into the PABS domain. S-methyl-5'-thioadenosine is bound at residue Gln33. Residues His64 and Asp88 each coordinate spermidine. S-methyl-5'-thioadenosine contacts are provided by residues Glu108 and 140–141 (DG). Residue Asp158 is the Proton acceptor of the active site. 158–161 (DSTD) is a binding site for spermidine. Residue Pro165 participates in S-methyl-5'-thioadenosine binding.

This sequence belongs to the spermidine/spermine synthase family. As to quaternary structure, homodimer or homotetramer.

The protein localises to the cytoplasm. The catalysed reaction is S-adenosyl 3-(methylsulfanyl)propylamine + putrescine = S-methyl-5'-thioadenosine + spermidine + H(+). It participates in amine and polyamine biosynthesis; spermidine biosynthesis; spermidine from putrescine: step 1/1. In terms of biological role, catalyzes the irreversible transfer of a propylamine group from the amino donor S-adenosylmethioninamine (decarboxy-AdoMet) to putrescine (1,4-diaminobutane) to yield spermidine. This is Polyamine aminopropyltransferase from Ruegeria sp. (strain TM1040) (Silicibacter sp.).